A 673-amino-acid polypeptide reads, in one-letter code: Armadillo repeat-containing protein 8 (673 aa).

N-acetylalanine is present on Ala2. ARM repeat units lie at residues Asn51 to Met92, Glu95 to Thr134, Thr138 to Lys176, Pro178 to Phe217, Met224 to Arg265, Ile269 to Glu309, Glu313 to Lys352, Asp374 to Arg413, Gln416 to Leu455, Ser458 to Phe497, Gln501 to Ser540, Pro543 to Asp585, Thr588 to Trp627, and Gln634 to Ala673. Residue Ser337 is modified to Phosphoserine. Ser512 is subject to Phosphoserine.

As to quaternary structure, identified in the CTLH complex that contains GID4, RANBP9 and/or RANBP10, MKLN1, MAEA, RMND5A (or alternatively its paralog RMND5B), GID8, ARMC8, WDR26 and YPEL5. Within this complex, MAEA, RMND5A (or alternatively its paralog RMND5B), GID8, WDR26, and RANBP9 and/or RANBP10 form the catalytic core, while GID4, MKLN1, ARMC8 and YPEL5 have ancillary roles.

It is found in the nucleus. The protein resides in the cytoplasm. Component of the CTLH E3 ubiquitin-protein ligase complex that selectively accepts ubiquitin from UBE2H and mediates ubiquitination and subsequent proteasomal degradation of the transcription factor HBP1. In Homo sapiens (Human), this protein is Armadillo repeat-containing protein 8 (ARMC8).